Here is a 156-residue protein sequence, read N- to C-terminus: Small ribosomal subunit protein uS7 (156 aa).

Belongs to the universal ribosomal protein uS7 family. Part of the 30S ribosomal subunit. Contacts proteins S9 and S11.

In terms of biological role, one of the primary rRNA binding proteins, it binds directly to 16S rRNA where it nucleates assembly of the head domain of the 30S subunit. Is located at the subunit interface close to the decoding center, probably blocks exit of the E-site tRNA. The sequence is that of Small ribosomal subunit protein uS7 from Mycolicibacterium vanbaalenii (strain DSM 7251 / JCM 13017 / BCRC 16820 / KCTC 9966 / NRRL B-24157 / PYR-1) (Mycobacterium vanbaalenii).